The primary structure comprises 158 residues: 3-hydroxyacyl-[acyl-carrier-protein] dehydratase FabZ (158 aa).

Residue His62 is part of the active site.

The protein belongs to the thioester dehydratase family. FabZ subfamily.

It is found in the cytoplasm. The catalysed reaction is a (3R)-hydroxyacyl-[ACP] = a (2E)-enoyl-[ACP] + H2O. In terms of biological role, involved in unsaturated fatty acids biosynthesis. Catalyzes the dehydration of short chain beta-hydroxyacyl-ACPs and long chain saturated and unsaturated beta-hydroxyacyl-ACPs. This Novosphingobium aromaticivorans (strain ATCC 700278 / DSM 12444 / CCUG 56034 / CIP 105152 / NBRC 16084 / F199) protein is 3-hydroxyacyl-[acyl-carrier-protein] dehydratase FabZ.